The chain runs to 354 residues: Macrosialin (354 aa).

Positions methionine 1–glycine 21 are cleaved as a signal peptide. Residues asparagine 22 to serine 319 lie on the Extracellular side of the membrane. The tract at residues aspartate 23 to proline 140 is mucin-like. Residues proline 40 to histidine 51 are compositionally biased toward low complexity. Residues proline 40–tryptophan 162 are disordered. Basic residues predominate over residues arginine 52–threonine 61. Residues histidine 62–threonine 84 are compositionally biased toward low complexity. Tandem repeats lie at residues threonine 70 to alanine 99 and threonine 100 to alanine 129. Residues threonine 70–alanine 129 are 2 X 30 AA tandem repeats. Polar residues predominate over residues serine 85–glutamine 102. 2 N-linked (GlcNAc...) asparagine glycosylation sites follow: asparagine 88 and asparagine 96. The segment covering glycine 103–glycine 117 has biased composition (low complexity). Residues asparagine 118 and asparagine 126 are each glycosylated (N-linked (GlcNAc...) asparagine). Polar residues predominate over residues valine 121–threonine 135. Pro residues predominate over residues proline 140–serine 150. 5 N-linked (GlcNAc...) asparagine glycosylation sites follow: asparagine 164, asparagine 199, asparagine 246, asparagine 261, and asparagine 279. Cysteines 169 and 207 form a disulfide. Cysteine 277 and cysteine 314 form a disulfide bridge. Residues isoleucine 320–isoleucine 344 form a helical membrane-spanning segment. Residues arginine 345–leucine 354 are Cytoplasmic-facing.

The protein belongs to the LAMP family. N- and O-glycosylated. As to expression, highly expressed by blood monocytes and tissue macrophages. Also expressed in lymphocytes, fibroblasts and endothelial cells. Expressed in many tumor cell lines which could allow them to attach to selectins on vascular endothelium, facilitating their dissemination to secondary sites.

It localises to the cell membrane. The protein localises to the endosome membrane. Its subcellular location is the lysosome membrane. Could play a role in phagocytic activities of tissue macrophages, both in intracellular lysosomal metabolism and extracellular cell-cell and cell-pathogen interactions. Binds to tissue- and organ-specific lectins or selectins, allowing homing of macrophage subsets to particular sites. Rapid recirculation of CD68 from endosomes and lysosomes to the plasma membrane may allow macrophages to crawl over selectin-bearing substrates or other cells. The sequence is that of Macrosialin (CD68) from Homo sapiens (Human).